A 336-amino-acid chain; its full sequence is D-alanine--D-alanine ligase (336 aa).

Residues 124-330 (KMWFSALGVP…FTEYLIDVIG (207 aa)) enclose the ATP-grasp domain. 154 to 209 (AFDNWGSVFVKAASQGSSVGCYKVDVKANIANVLKDAFSYAPYVVVEQTIHARELE) contributes to the ATP binding site. Residues D284, E297, and N299 each coordinate Mg(2+).

Belongs to the D-alanine--D-alanine ligase family. The cofactor is Mg(2+). Mn(2+) is required as a cofactor.

It is found in the cytoplasm. It catalyses the reaction 2 D-alanine + ATP = D-alanyl-D-alanine + ADP + phosphate + H(+). It participates in cell wall biogenesis; peptidoglycan biosynthesis. Cell wall formation. The polypeptide is D-alanine--D-alanine ligase (Shewanella frigidimarina (strain NCIMB 400)).